Here is an 814-residue protein sequence, read N- to C-terminus: Cellulase/esterase CelE (814 aa).

A signal peptide spans 1 to 34; that stretch reads MKKIVSLVCVLVMLVSILGSFSVVAASPVKGFQV. The interval 35 to 354 is cellulase; the sequence is SGTKLLDASG…AVFWWDNGYY (320 aa). The Proton donor; for cellulase activity role is filled by glutamate 193. The Nucleophile; for cellulase activity role is filled by glutamate 316. One can recognise a Dockerin domain in the interval 409-479; that stretch reads ANILYGDVNG…LLRSIDKFPA (71 aa). Residues aspartate 415, asparagine 417, aspartate 419, glycine 420, lysine 421, aspartate 426, aspartate 451, valine 452, asparagine 453, aspartate 455, lysine 457, and aspartate 462 each coordinate Ca(2+). An esterase region spans residues 490–814; sequence PGILYNGRFD…TAEIKNKLGW (325 aa). The active-site Nucleophile; for esterase activity is serine 612.

It in the N-terminal section; belongs to the glycosyl hydrolase 5 (cellulase A) family. This sequence in the C-terminal section; belongs to the carbohydrate esterase 2 (CE2) family.

The protein localises to the secreted. It catalyses the reaction Endohydrolysis of (1-&gt;4)-beta-D-glucosidic linkages in cellulose, lichenin and cereal beta-D-glucans.. It carries out the reaction Deacetylation of xylans and xylo-oligosaccharides.. It participates in glycan metabolism; cellulose degradation. It functions in the pathway glycan degradation; xylan degradation. Esterase activity of the CE2 module is inhibited when this domain binds to cellohexaose or beta-glucan. Functionally, multifunctional enzyme involved in the degradation of plant cell wall polysaccharides. Displays endoglucanase activity against carboxymethyl cellulose (CMC) and barley beta-glucan. Also catalyzes the deacetylation of acetylated birchwood xylan and glucomannan, with a preference for the latter, and of the synthetic substrate 4-nitrophenyl acetate (4-NPAc). The polypeptide is Cellulase/esterase CelE (Acetivibrio thermocellus (strain ATCC 27405 / DSM 1237 / JCM 9322 / NBRC 103400 / NCIMB 10682 / NRRL B-4536 / VPI 7372) (Clostridium thermocellum)).